Here is a 364-residue protein sequence, read N- to C-terminus: Chorismate synthase (364 aa).

Residue arginine 48 participates in NADP(+) binding. FMN contacts are provided by residues 131–133 (RSS), 243–244 (NA), glycine 288, 303–307 (KPTSS), and arginine 329.

The protein belongs to the chorismate synthase family. As to quaternary structure, homotetramer. FMNH2 is required as a cofactor.

The enzyme catalyses 5-O-(1-carboxyvinyl)-3-phosphoshikimate = chorismate + phosphate. The protein operates within metabolic intermediate biosynthesis; chorismate biosynthesis; chorismate from D-erythrose 4-phosphate and phosphoenolpyruvate: step 7/7. Its function is as follows. Catalyzes the anti-1,4-elimination of the C-3 phosphate and the C-6 proR hydrogen from 5-enolpyruvylshikimate-3-phosphate (EPSP) to yield chorismate, which is the branch point compound that serves as the starting substrate for the three terminal pathways of aromatic amino acid biosynthesis. This reaction introduces a second double bond into the aromatic ring system. The sequence is that of Chorismate synthase from Brucella anthropi (strain ATCC 49188 / DSM 6882 / CCUG 24695 / JCM 21032 / LMG 3331 / NBRC 15819 / NCTC 12168 / Alc 37) (Ochrobactrum anthropi).